A 129-amino-acid polypeptide reads, in one-letter code: Small ribosomal subunit protein uS9 (129 aa).

Belongs to the universal ribosomal protein uS9 family.

This Chlorobium chlorochromatii (strain CaD3) protein is Small ribosomal subunit protein uS9.